Here is a 231-residue protein sequence, read N- to C-terminus: Elongation factor 1-delta 2 (231 aa).

At A2 the chain carries N-acetylalanine. The region spanning 11–73 (SGLKKLDEHL…LRISGVSAEG (63 aa)) is the GST C-terminal domain. A disordered region spans residues 82–136 (SPITEEAVATPPAADSKDTAAEEEDDDDVDLFGEETEEEKKAAEERAASVKASTK). Acidic residues predominate over residues 102-118 (AEEEDDDDVDLFGEETE). Positions 119-129 (EEKKAAEERAA) are enriched in basic and acidic residues.

It belongs to the EF-1-beta/EF-1-delta family. In terms of assembly, EF-1 is composed of 4 subunits: alpha, beta (1B-alpha=beta'), delta (1B-beta), and gamma (1B-gamma).

EF-1-beta and EF-1-delta stimulate the exchange of GDP bound to EF-1-alpha to GTP. The sequence is that of Elongation factor 1-delta 2 from Arabidopsis thaliana (Mouse-ear cress).